The primary structure comprises 345 residues: Anthranilate phosphoribosyltransferase (345 aa).

Residues G83, 86-87, T91, 93-96, 111-119, and S123 contribute to the 5-phospho-alpha-D-ribose 1-diphosphate site; these read GD, NIST, and KHGNRNLSS. Residue G83 participates in anthranilate binding. Position 95 (S95) interacts with Mg(2+). An anthranilate-binding site is contributed by N114. Residue R169 coordinates anthranilate. Residues D228 and E229 each contribute to the Mg(2+) site.

This sequence belongs to the anthranilate phosphoribosyltransferase family. As to quaternary structure, homodimer. It depends on Mg(2+) as a cofactor.

It carries out the reaction N-(5-phospho-beta-D-ribosyl)anthranilate + diphosphate = 5-phospho-alpha-D-ribose 1-diphosphate + anthranilate. It participates in amino-acid biosynthesis; L-tryptophan biosynthesis; L-tryptophan from chorismate: step 2/5. Its function is as follows. Catalyzes the transfer of the phosphoribosyl group of 5-phosphorylribose-1-pyrophosphate (PRPP) to anthranilate to yield N-(5'-phosphoribosyl)-anthranilate (PRA). In Paracoccus denitrificans (strain Pd 1222), this protein is Anthranilate phosphoribosyltransferase.